Reading from the N-terminus, the 260-residue chain is Phosphatidate cytidylyltransferase (260 aa).

7 consecutive transmembrane segments (helical) span residues 9–29, 46–66, 70–90, 102–122, 130–150, 172–192, and 196–216; these read IIALLIFLPILLMGGTTLMLF, MIKLISVPGIFSALALIIIML, AGDWVSNIQLKSLIAMSFILL, FMDAAFCLMSVAYVGIGFMYF, LHYILYAFLVVWLTDTGAYIF, FIGGLICSLIVPIVMLFFVDF, and IWLLLLVTIILSIFGQLGDLV.

The protein belongs to the CDS family.

The protein localises to the cell membrane. The catalysed reaction is a 1,2-diacyl-sn-glycero-3-phosphate + CTP + H(+) = a CDP-1,2-diacyl-sn-glycerol + diphosphate. Its pathway is phospholipid metabolism; CDP-diacylglycerol biosynthesis; CDP-diacylglycerol from sn-glycerol 3-phosphate: step 3/3. The sequence is that of Phosphatidate cytidylyltransferase (cdsA) from Staphylococcus haemolyticus (strain JCSC1435).